Consider the following 1621-residue polypeptide: Ferredoxin-dependent glutamate synthase, chloroplastic (1621 aa).

The N-terminal 57 residues, Met1–Val57, are a transit peptide targeting the chloroplast. The active-site Nucleophile is the Cys105. Positions Cys105–Ser504 constitute a Glutamine amidotransferase type-2 domain. Leu1183–Arg1240 is an FMN binding site. [3Fe-4S] cluster contacts are provided by Cys1236, Cys1242, and Cys1247.

This sequence belongs to the glutamate synthase family. In terms of assembly, interacts with ferredoxin. Interacts (via FMN-binding domain) with SQD1. The cofactor is [3Fe-4S] cluster. Requires FMN as cofactor. In terms of tissue distribution, expressed in young leaves. Not detected in mature leaves.

The protein resides in the plastid. The protein localises to the chloroplast stroma. It catalyses the reaction 2 oxidized [2Fe-2S]-[ferredoxin] + 2 L-glutamate = L-glutamine + 2 reduced [2Fe-2S]-[ferredoxin] + 2-oxoglutarate + 2 H(+). It participates in amino-acid biosynthesis; L-glutamate biosynthesis via GLT pathway; L-glutamate from 2-oxoglutarate and L-glutamine (ferredoxin route): step 1/1. Its pathway is energy metabolism; nitrogen metabolism. With respect to regulation, inhibited by N-bromosuccinimide, which is specific for modification of tryptophan residues probably involved in the electron transfer from ferredoxin. Its function is as follows. Catalyzes the reductive conversion of 2-oxoglutarate plus glutamine to two molecules of glutamate, using reduced ferredoxin as the electron donor. Contains one FMN but no FAD. The FMN-binding domain is also involved in the delivery of sulfite to the reaction center of SQD1. The chain is Ferredoxin-dependent glutamate synthase, chloroplastic from Spinacia oleracea (Spinach).